A 314-amino-acid polypeptide reads, in one-letter code: Vacuolar membrane protein FOSTERSO_4058 (314 aa).

The disordered stretch occupies residues 32-59 (KPTSSVVSETSSKSLPSLTSSAFSTSSG). A helical membrane pass occupies residues 93 to 113 (VYIAVGAVIGAIFISILIWWL). S148, S254, and S274 each carry phosphoserine. Positions 240–309 (EERKLNLNRP…PSMFLDDVLN (70 aa)) are disordered. Residues 254-269 (SPERKEKKINSMEGYH) show a composition bias toward basic and acidic residues.

The protein belongs to the PRM5 family.

It localises to the vacuole membrane. This Saccharomyces cerevisiae (strain FostersO) (Baker's yeast) protein is Vacuolar membrane protein FOSTERSO_4058.